The primary structure comprises 101 residues: Small ribosomal subunit protein uS10 (101 aa).

This sequence belongs to the universal ribosomal protein uS10 family. In terms of assembly, part of the 30S ribosomal subunit.

Its function is as follows. Involved in the binding of tRNA to the ribosomes. The polypeptide is Small ribosomal subunit protein uS10 (Mycobacterium ulcerans (strain Agy99)).